Consider the following 498-residue polypeptide: Protein adenylyltransferase Fic (498 aa).

The chain crosses the membrane as a helical span at residues 43–63; sequence FAFLAFLAGSFLAFSLHALIS. TPR repeat units lie at residues 126–159 and 160–194; these read ALSS…APRH and PEVL…NPSH. The short motif at 251–256 is the Inhibitory (S/T)XXXE(G/N) motif element; the sequence is SVGIEG. ATP-binding positions include glutamate 255 and 336-339; that span reads VGGH. Residues 305–440 enclose the Fido domain; sequence ITIKDILELH…IRPFVRFIAD (136 aa). Histidine 383 is an active-site residue. ATP-binding positions include 387 to 394, 419 to 420, and asparagine 427; these read DGNGRTSR and YY.

The protein belongs to the fic family. As to quaternary structure, homodimer.

The protein resides in the membrane. It carries out the reaction L-tyrosyl-[protein] + ATP = O-(5'-adenylyl)-L-tyrosyl-[protein] + diphosphate. The catalysed reaction is L-threonyl-[protein] + ATP = 3-O-(5'-adenylyl)-L-threonyl-[protein] + diphosphate. It catalyses the reaction 3-O-(5'-adenylyl)-L-threonyl-[protein] + H2O = L-threonyl-[protein] + AMP + H(+). With respect to regulation, the side chain of Glu-255 determines which of the two opposing activities (AMPylase or de-AMPylase) will take place. In response to endoplasmic reticulum stress, mediates de-AMPylase activity. Adenylyltransferase activity is inhibited by the inhibitory helix present at the N-terminus: Glu-255 binds ATP and competes with ATP-binding at Arg-394, thereby preventing adenylyltransferase activity. In unstressed cells, disengagement of Glu-255 promotes adenylyltransferase activity. Activation dissociates ATP-binding from Glu-255, allowing ordered binding of the entire ATP moiety with the alpha-phosphate in an orientation that is productive for accepting an incoming target hydroxyl side chain. Functionally, protein that can both mediate the addition of adenosine 5'-monophosphate (AMP) to specific residues of target proteins (AMPylation), and the removal of the same modification from target proteins (de-AMPylation), depending on the context. The side chain of Glu-255 determines which of the two opposing activities (AMPylase or de-AMPylase) will take place. Acts as a key regulator of the unfolded protein response (UPR) by mediating AMPylation or de-AMPylation of Hsc70-3/BiP. In unstressed cells, acts as an adenylyltransferase by mediating AMPylation of Hsc70-3/BiP at 'Thr-518', thereby inactivating it. In response to endoplasmic reticulum stress, acts as a phosphodiesterase by mediating removal of ATP (de-AMPylation) from Hsc70-3/BiP at 'Thr-518', leading to restore HSPA5/BiP activity. The polypeptide is Protein adenylyltransferase Fic (Drosophila willistoni (Fruit fly)).